A 299-amino-acid chain; its full sequence is Nitrogenase iron protein (299 aa).

Gly8–Ser15 contributes to the ATP binding site. Residue Cys96 coordinates [4Fe-4S] cluster. Arg99 is modified (ADP-ribosylarginine; by dinitrogenase reductase ADP-ribosyltransferase). Cys130 is a binding site for [4Fe-4S] cluster.

Belongs to the NifH/BchL/ChlL family. Homodimer. Requires [4Fe-4S] cluster as cofactor. In terms of processing, the reversible ADP-ribosylation of Arg-99 inactivates the nitrogenase reductase and regulates nitrogenase activity.

The catalysed reaction is N2 + 8 reduced [2Fe-2S]-[ferredoxin] + 16 ATP + 16 H2O = H2 + 8 oxidized [2Fe-2S]-[ferredoxin] + 2 NH4(+) + 16 ADP + 16 phosphate + 6 H(+). The key enzymatic reactions in nitrogen fixation are catalyzed by the nitrogenase complex, which has 2 components: the iron protein and the molybdenum-iron protein. The polypeptide is Nitrogenase iron protein (Gloeothece citriformis (strain PCC 7424) (Cyanothece sp. (strain PCC 7424))).